Here is a 176-residue protein sequence, read N- to C-terminus: Xanthine-guanine phosphoribosyltransferase (176 aa).

5-phospho-alpha-D-ribose 1-diphosphate is bound by residues 51-52 (RG) and 110-118 (DDLVDTGKT). Residue D111 participates in Mg(2+) binding. Residues D114 and I157 each coordinate guanine. D114 and I157 together coordinate xanthine. GMP contacts are provided by residues 114–118 (DTGKT) and 156–157 (WI).

It belongs to the purine/pyrimidine phosphoribosyltransferase family. XGPT subfamily. In terms of assembly, homotetramer. The cofactor is Mg(2+).

The protein resides in the cell inner membrane. It catalyses the reaction GMP + diphosphate = guanine + 5-phospho-alpha-D-ribose 1-diphosphate. It carries out the reaction XMP + diphosphate = xanthine + 5-phospho-alpha-D-ribose 1-diphosphate. The catalysed reaction is IMP + diphosphate = hypoxanthine + 5-phospho-alpha-D-ribose 1-diphosphate. The protein operates within purine metabolism; GMP biosynthesis via salvage pathway; GMP from guanine: step 1/1. Its pathway is purine metabolism; XMP biosynthesis via salvage pathway; XMP from xanthine: step 1/1. In terms of biological role, purine salvage pathway enzyme that catalyzes the transfer of the ribosyl-5-phosphate group from 5-phospho-alpha-D-ribose 1-diphosphate (PRPP) to the N9 position of the 6-oxopurines guanine and xanthine to form the corresponding ribonucleotides GMP (guanosine 5'-monophosphate) and XMP (xanthosine 5'-monophosphate), with the release of PPi. To a lesser extent, also acts on hypoxanthine. This is Xanthine-guanine phosphoribosyltransferase from Bradyrhizobium diazoefficiens (strain JCM 10833 / BCRC 13528 / IAM 13628 / NBRC 14792 / USDA 110).